The sequence spans 406 residues: WD repeat and SOCS box-containing protein 2 (406 aa).

The segment at 70–89 (AKSRSSKNETKGRGSPKEKT) is disordered. WD repeat units follow at residues 107-150 (PPSK…LLLN), 153-193 (GHQD…KQIQ), 197-236 (GHLQ…LIRK), 239-278 (GHQS…RLRS), and 293-332 (VHIS…PIAF). The SOCS box domain occupies 358 to 406 (HVQFWTAPRVLSSLKHLCRKALRSFLTTYQVLALPIPKKMKEFLTYRTF).

The protein operates within protein modification; protein ubiquitination. In terms of biological role, may be a substrate-recognition component of a SCF-like ECS (Elongin-Cullin-SOCS-box protein) E3 ubiquitin ligase complex which mediates the ubiquitination and subsequent proteasomal degradation of target proteins. The polypeptide is WD repeat and SOCS box-containing protein 2 (WSB2) (Bos taurus (Bovine)).